Consider the following 66-residue polypeptide: MKRKDTLKDYRGKSIDQLQEAKIELLQQLFSLRMQKGTGQLKKNHLFKSAKRDIARINTIISEKNK.

It belongs to the universal ribosomal protein uL29 family.

The protein is Large ribosomal subunit protein uL29 of Francisella tularensis subsp. tularensis (strain FSC 198).